We begin with the raw amino-acid sequence, 745 residues long: Exocyst complex component 3 (745 aa).

Lys-28 carries the N6-acetyllysine modification.

The protein belongs to the SEC6 family. As to quaternary structure, the exocyst complex is composed of EXOC1, EXOC2, EXOC3, EXOC4, EXOC5, EXOC6, EXOC7 and EXOC8. Interacts with EXOC3L1. Interacts with BIRC6/bruce. Interacts with MYRIP. Interacts with SLC6A9.

The protein resides in the cytoplasm. Its subcellular location is the perinuclear region. It localises to the cell projection. It is found in the growth cone. The protein localises to the neuron projection. The protein resides in the midbody. Its subcellular location is the golgi apparatus. Its function is as follows. Component of the exocyst complex involved in the docking of exocytic vesicles with fusion sites on the plasma membrane. This is Exocyst complex component 3 (EXOC3) from Bos taurus (Bovine).